Here is a 970-residue protein sequence, read N- to C-terminus: Polycystin-2 (970 aa).

Polar residues predominate over residues 1-11 (MVNSSRVQPQQ). The interval 1-182 (MVNSSRVQPQ…GDPLHRHLPL (182 aa)) is disordered. The Cytoplasmic portion of the chain corresponds to 1 to 221 (MVNSSRVQPQ…STDREKYLKS (221 aa)). The span at 25-45 (GPGRLMAGGAIAGAGLAAPGG) shows a compositional bias: low complexity. The span at 47 to 60 (REQRGLEIEMERIR) shows a compositional bias: basic and acidic residues. Positions 62-83 (AAARDPPAGASASPSPPLSSCS) are enriched in low complexity. S76 and S80 each carry phosphoserine. The segment covering 95 to 109 (EAEEEEEEEEVEGEE) has biased composition (acidic residues). A compositionally biased stretch (low complexity) spans 125–138 (RRSASSSAVSSAGA). The residue at position 139 (R139) is an Omega-N-methylarginine. The segment covering 139-148 (RGRGLGGYHG) has biased composition (gly residues). A helical transmembrane segment spans residues 222–243 (VLRELATYLLFLIVLCILTYGM). Topologically, residues 244–470 (MSSSVYYYTR…PVKLIRYVTT (227 aa)) are extracellular. 3 N-linked (GlcNAc...) asparagine glycosylation sites follow: N301, N307, and N330. A disulfide bridge connects residues C333 and C346. Residues N364 and N377 are each glycosylated (N-linked (GlcNAc...) asparagine). The chain crosses the membrane as a helical span at residues 471–491 (FDFFLAACEIIFCLFILYYVV). Residues 492 to 507 (EEILEIRIHKLHYFRS) lie on the Cytoplasmic side of the membrane. A helical membrane pass occupies residues 508–528 (FWNCLDVVIIVLSVVAIGINI). Residues 529–554 (YRTSNVEALLQFLEDQNTFPNFENLA) are Extracellular-facing. Residues 555–575 (YWQTQFNNIAAVIVFFVWIKL) form a helical membrane-spanning segment. A cholesterol-binding site is contributed by Q559. At 576–599 (FKFINFNRTMSQLSTTMSRCAKDL) the chain is on the cytoplasmic side. The chain crosses the membrane as a helical span at residues 600–621 (FGFAIMFFIIFLAYAQLAYLVF). The Extracellular segment spans residues 622-633 (GTQVDDFSTFQE). The segment at residues 634-648 (CIFTQFRIILGDINF) is an intramembrane region (pore-forming). Residue L643 participates in Ca(2+) binding. A Selectivity filter motif is present at residues 643–645 (LGD). Residues 649 to 656 (AEIEEANR) lie on the Extracellular side of the membrane. A helical membrane pass occupies residues 657 to 677 (VLGPIYFTTFVFFMFFILLNM). Topologically, residues 678-970 (FLAIINDTYS…GGNGSANIHV (293 aa)) are cytoplasmic. The region spanning 750 to 785 (KGHTDAEIEAIFTKYDQDGDQELTEHEHQQMRDDLE) is the EF-hand domain. Residues D765, D767, D769, E771, and E776 each contribute to the Ca(2+) site. The interval 766-833 (QDGDQELTEH…HSSRRRGSIS (68 aa)) is disordered. Positions 772-797 (LTEHEHQQMRDDLEKEREDLDLDHSS) are enriched in basic and acidic residues. A compositionally biased stretch (low complexity) spans 798 to 809 (LPRPMSSRSFPR). Phosphoserine is present on residues S803, S810, S814, and S831. The tract at residues 805 to 824 (RSFPRSLDDSEEEDDDDSGH) is linker. Residues 812-823 (DDSEEEDDDDSG) are important for interaction with PACS1 and PACS2. Residues 835 to 874 (GVSYEEFQVLVRRVDRMEHSIGSIVSKIDAVIVKLEIMER) are a coiled coil. A disordered region spans residues 921–970 (DDAASQISHGLGTPLGLNGQPRPRSSRPSSSQSTEGMEGGGGNGSANIHV). Positions 940-956 (QPRPRSSRPSSSQSTEG) are enriched in low complexity.

It belongs to the polycystin family. Homotetramer. Component of the heterotetrameric polycystin channel complex with PKD1; the tetramer contains one PKD1 chain and three PKD2 chains. Isoform 1 interacts with PKD1 while isoform 3 does not. Interacts with PKD1L1; probably forms a Ca(2+) channel. Interacts with CD2AP. Interacts with HAX1. Interacts with NEK8. Part of a complex containing AKAP5, ADCY5, ADCY6 and PDE4C. Interacts (via C-terminus) with TRPV4 (via C-terminus). Interacts (via C-terminal acidic region) with PACS1 and PACS2; these interactions retain the protein in the endoplasmic reticulum and prevent trafficking to the cell membrane. Interacts with TMEM33. Form a heterotetramer with TRPC1 with a 2:2 stoichiometry; has distinct channel properties separate from PKD2 or TRPC1 homomers alone. Interacts with TMEM120A; TMEM120A inhibits PKD2 channel activity through the physical association of PKD2 with TMEM120A. Interacts (via N-terminus) with RYR2; regulates RYR2 channel activity. Post-translationally, N-glycosylated. The four subunits in a tetramer probably differ in the extent of glycosylation; simultaneous glycosylation of all experimentally validated sites would probably create steric hindrance. Phosphorylated. Phosphorylation is important for protein function; a mutant that lacks the N-terminal phosphorylation sites cannot complement a zebrafish pkd2-deficient mutant. PKD-mediated phosphorylation at the C-terminus regulates its function in the release of Ca(2+) stores from the endoplasmic reticulum. Phosphorylation at Ser-814 regulates PKD2 trafficking. Phosphorylation at Ser-76 is required for PKD2 trafficking to or retention at the lateral plasma membrane. Phosphorylation at Ser-803, Ser-814 and Ser-831 regulates PKD2 channel activity. In terms of processing, sumoylated by SUMO1; sumoylation regulates PKD2 membrane recycling and is necessary for intravascular pressure-induced arterial contractility. Expressed in mesenchymally derived structures in the developing embryo at day 12.5. In adult, mostly expressed in kidney.

Its subcellular location is the cell projection. The protein localises to the cilium membrane. It is found in the endoplasmic reticulum membrane. The protein resides in the cell membrane. It localises to the basolateral cell membrane. Its subcellular location is the cytoplasmic vesicle membrane. The protein localises to the golgi apparatus. It is found in the vesicle. The protein resides in the secreted. It localises to the extracellular exosome. It carries out the reaction K(+)(in) = K(+)(out). The catalysed reaction is Na(+)(in) = Na(+)(out). It catalyses the reaction Ca(2+)(in) = Ca(2+)(out). With respect to regulation, channel activity is regulated by phosphorylation. Channel activity is regulated by intracellular Ca(2+). At the endoplasmic reticulum membrane (ER), TMEM33 enhances its channel activity. TMEM120A inhibits the channel activity of PKD2, and mediates mechanosensitivity of the PKD2-TMEM120A channel complex. PKD1/PKD2 complex on the plasma membrane is activated by PKD1 N-terminus. Its function is as follows. Forms a nonselective cation channel. Can function as a homotetrameric ion channel or can form heteromer with PKD1. Displays distinct function depending on its subcellular localization and regulation by its binding partners. Functions as a cation channel, with a preference for monovalent cations over divalent cations that allows K(+), Na(+) and Ca(2+) influx, with low selectivity for Ca(2+). Involved in fluid-flow mechanosensation in the primary cilium in renal epithelium. In the endoplasmic reticulum, likely functions as a K(+) channel to facilitate Ca(2+) release. The heterotetrameric PKD1/PKD2 channel has higher Ca(2+) permeability than homomeric PKD2 channel and acts as a primarily Ca(2+)-permeable channel. Interacts with and acts as a regulator of a number of other channels, such as TRPV4, TRPC1, IP3R, RYR2, ultimately further affecting intracellular signaling, to modulate intracellular Ca(2+) signaling. Together with TRPV4, forms mechano- and thermosensitive channels in cilium. In cardiomyocytes, PKD2 modulates Ca(2+) release from stimulated RYR2 receptors through direct association. Also involved in left-right axis specification via its role in sensing nodal flow; forms a complex with PKD1L1 in cilia to facilitate flow detection in left-right patterning. Acts as a regulator of cilium length together with PKD1. Mediates systemic blood pressure and contributes to the myogenic response in cerebral arteries though vasoconstriction. The sequence is that of Polycystin-2 from Bos taurus (Bovine).